Reading from the N-terminus, the 29-residue chain is U-limacoditoxin(12)-Dv72 (29 aa).

The N-terminal stretch at 1–15 (MNFGMLKLLTVLIIC) is a signal peptide. Residue N27 is modified to Asparagine amide.

The protein belongs to the limacoditoxin-12 family. Expressed by the venom secretory cell of the spine. The spine is a cuticular structure containing a single large nucleated venom-secreting cell at its base. It is an independent unit capable of producing, storing and injecting venom. On the back of D.vulnerans caterpillars, spines are grouped together by 50 to 100 to form scoli, of which there are eight in D.vulnerans.

The protein resides in the secreted. Probable toxin. Does not show insecticidal, antimicrobial and antiparasitic activities. Does not induce increase in intracellular calcium in mouse DRG neurons, suggesting that it does not induce pain. In Doratifera vulnerans (Mottled cup moth), this protein is U-limacoditoxin(12)-Dv72.